Reading from the N-terminus, the 189-residue chain is Small ribosomal subunit protein uS5 (189 aa).

The 64-residue stretch at 23-86 (FIDKLVHINR…ESAKREMIYV (64 aa)) folds into the S5 DRBM domain.

It belongs to the universal ribosomal protein uS5 family. In terms of assembly, part of the 30S ribosomal subunit. Contacts proteins S4 and S8.

Functionally, with S4 and S12 plays an important role in translational accuracy. Located at the back of the 30S subunit body where it stabilizes the conformation of the head with respect to the body. The polypeptide is Small ribosomal subunit protein uS5 (Bartonella bacilliformis (strain ATCC 35685 / KC583 / Herrer 020/F12,63)).